A 374-amino-acid polypeptide reads, in one-letter code: Resuscitation-promoting factor Rpf2 (374 aa).

The N-terminal stretch at 1 to 40 is a signal peptide; sequence MAPHQKSRINRINSTRSVPLRLATGGVLATLLIGGVTAAA. The 81-residue stretch at 210–290 folds into the G5 domain; it reads IDRVDNTEIT…PATISRGTKT (81 aa). The segment at 228 to 252 is disordered; it reads PTYVDDPEAPAGDETVVEEGAPGTK.

The protein belongs to the transglycosylase family. Rpf subfamily. In terms of processing, glycosylated; by Pmt, by at least mannose and galactose. Other unidentified sugars may also be present. Post-translationally, may be subject to proteolytic cleavage as multiple shorter forms are detected in gels. At least 3 non-glycosylated protein isoforms of 35, 40 and 42 kDa are seen in gels.

It localises to the secreted. The protein localises to the cell surface. Its function is as follows. Factor that stimulates resuscitation of dormant cells. Has peptidoglycan (PG) hydrolytic activity. Active in the pM concentration range. Has little to no effect on actively-growing cells. PG fragments could either directly activate the resuscitation pathway of dormant bacteria or serve as a substrate for endogenous Rpf, resulting in low molecular weight products with resuscitation activity. This chain is Resuscitation-promoting factor Rpf2 (rpf2), found in Corynebacterium glutamicum (strain ATCC 13032 / DSM 20300 / JCM 1318 / BCRC 11384 / CCUG 27702 / LMG 3730 / NBRC 12168 / NCIMB 10025 / NRRL B-2784 / 534).